Reading from the N-terminus, the 635-residue chain is Chaperone protein DnaK (635 aa).

At threonine 198 the chain carries Phosphothreonine; by autocatalysis. The segment at 598 to 635 (YAKAQPGEEQAGGAPHEGEAKDEKVVDADFEEVKEDKK) is disordered. The span at 613–624 (HEGEAKDEKVVD) shows a compositional bias: basic and acidic residues. Positions 625–635 (ADFEEVKEDKK) are enriched in acidic residues.

Belongs to the heat shock protein 70 family.

In terms of biological role, acts as a chaperone. The protein is Chaperone protein DnaK of Geotalea uraniireducens (strain Rf4) (Geobacter uraniireducens).